Here is a 539-residue protein sequence, read N- to C-terminus: Glutamate/serine transporter AimA (539 aa).

13 consecutive transmembrane segments (helical) span residues 11 to 31 (FSLM…FGAW), 36 to 56 (IAGP…LFIA), 82 to 102 (SFIG…VIPV), 137 to 157 (AFAS…VNLF), 164 to 184 (ITIF…FVGF), 199 to 219 (GWAS…FNGF), 238 to 258 (IAVV…QIAF), 283 to 303 (LAIA…AFVS), 350 to 370 (LIVS…AEII), 401 to 421 (LKGL…VLYW), 424 to 444 (WPLT…YFYY), 457 to 477 (FKAG…SYLG), and 486 to 506 (VIHY…FYVW).

This sequence belongs to the amino acid-polyamine-organocation (APC) superfamily. AGT (TC 2.A.3.11) family.

It is found in the cell membrane. Functionally, major glutamate and serine transporter. Cannot transport threonine. AimA is the major glutamate transporter under standard growth conditions when glutamate is not limiting in the medium. The sequence is that of Glutamate/serine transporter AimA from Bacillus subtilis (strain 168).